Consider the following 72-residue polypeptide: Delta-actitoxin-Avd2b 1 (72 aa).

A signal peptide spans 1-21; sequence MMNRLLVFLMLGAAFMLVVSA. Positions 22 to 42 are excised as a propeptide; the sequence is NDAYGDEPAFKDLNQGDESLG. 3 disulfides stabilise this stretch: cysteine 47-cysteine 62, cysteine 48-cysteine 56, and cysteine 50-cysteine 67.

Belongs to the sea anemone short toxin (type III) family.

Its subcellular location is the secreted. It localises to the nematocyst. Voltage-gated sodium channel (Nav) inhibitor. 1 uM completely inhibits insect voltage-gated sodium channel inactivation (DmNav1 from D.melanogaster). The sequence is that of Delta-actitoxin-Avd2b 1 from Anemonia viridis (Snakelocks anemone).